The chain runs to 347 residues: Haptoglobin (347 aa).

The signal sequence occupies residues 1–18 (MSALGAVIALLLWGQLFA). Positions 31–88 (DGCPKPPEIANGYVEHLVRYQCKKYYRLRTEGDGVYTLNNEKQWTNKAVGDKLPECEA) constitute a Sushi domain. Cystine bridges form between cysteine 52–cysteine 86, cysteine 90–cysteine 207, cysteine 250–cysteine 281, and cysteine 292–cysteine 322. One can recognise a Peptidase S1 domain in the interval 103-345 (ILGGHLDAKG…IQDWVQKTIA (243 aa)). N-linked (GlcNAc...) asparagine glycans are attached at residues asparagine 125, asparagine 148, asparagine 152, and asparagine 182. The tract at residues 259–264 (VPEKKT) is interaction with CD163.

The protein belongs to the peptidase S1 family. Tetramer of two alpha and two beta chains; disulfide-linked. The hemoglobin/haptoglobin complex is composed of a haptoglobin dimer bound to two hemoglobin alpha-beta dimers. Interacts with CD163. Interacts with ERGIC3. Expressed by the liver and secreted in plasma.

It localises to the secreted. As a result of hemolysis, hemoglobin is found to accumulate in the kidney and is secreted in the urine. Haptoglobin captures, and combines with free plasma hemoglobin to allow hepatic recycling of heme iron and to prevent kidney damage. Haptoglobin also acts as an antioxidant, has antibacterial activity and plays a role in modulating many aspects of the acute phase response. Hemoglobin/haptoglobin complexes are rapidly cleared by the macrophage CD163 scavenger receptor expressed on the surface of liver Kupfer cells through an endocytic lysosomal degradation pathway. This is Haptoglobin (HP) from Ateles geoffroyi (Black-handed spider monkey).